A 662-amino-acid polypeptide reads, in one-letter code: Transketolase (662 aa).

Histidine 28 is a binding site for substrate. Residues histidine 68 and 115 to 117 each bind thiamine diphosphate; that span reads GPL. Aspartate 156 is a Mg(2+) binding site. The thiamine diphosphate site is built by glycine 157 and asparagine 186. Mg(2+) contacts are provided by asparagine 186 and isoleucine 188. Residues histidine 261, arginine 356, and serine 383 each coordinate substrate. Histidine 261 contributes to the thiamine diphosphate binding site. Catalysis depends on glutamate 410, which acts as the Proton donor. Residue phenylalanine 436 coordinates thiamine diphosphate. Substrate contacts are provided by histidine 460, aspartate 468, and arginine 519.

It belongs to the transketolase family. In terms of assembly, homodimer. The cofactor is Mg(2+). Requires Ca(2+) as cofactor. It depends on Mn(2+) as a cofactor. Co(2+) is required as a cofactor. Thiamine diphosphate serves as cofactor.

It catalyses the reaction D-sedoheptulose 7-phosphate + D-glyceraldehyde 3-phosphate = aldehydo-D-ribose 5-phosphate + D-xylulose 5-phosphate. It participates in carbohydrate biosynthesis; Calvin cycle. Its pathway is carbohydrate degradation; pentose phosphate pathway. Catalyzes the transfer of a two-carbon ketol group from a ketose donor to an aldose acceptor, via a covalent intermediate with the cofactor thiamine pyrophosphate. The sequence is that of Transketolase (tkt) from Staphylococcus aureus (strain MRSA252).